A 334-amino-acid chain; its full sequence is Mitochondrial glycine transporter (334 aa).

Solcar repeat units lie at residues 10-94, 127-211, and 234-318; these read SKSS…IRQA, LSNT…FKRR, and RAAA…LIMR. 6 consecutive transmembrane segments (helical) span residues 16–41, 69–95, 133–158, 186–209, 238–264, and 293–311; these read FVAG…TRVQ, GTVP…RQAA, LLAG…VRYE, GFGA…EQFK, VNFS…KTRI, and GLGL…AWTL.

Belongs to the mitochondrial carrier (TC 2.A.29) family. SLC25A38 subfamily.

Its subcellular location is the mitochondrion inner membrane. It catalyses the reaction glycine(in) = glycine(out). In terms of biological role, mitochondrial glycine transporter that imports glycine into the mitochondrial matrix. Plays an important role in providing glycine for the first enzymatic step in heme biosynthesis, the condensation of glycine with succinyl-CoA to produce 5-aminolevulinate (ALA) in the mitochondrial matrix. The polypeptide is Mitochondrial glycine transporter (Pyricularia oryzae (strain 70-15 / ATCC MYA-4617 / FGSC 8958) (Rice blast fungus)).